The following is a 300-amino-acid chain: 33 kDa chaperonin (300 aa).

Intrachain disulfides connect cysteine 235-cysteine 237 and cysteine 269-cysteine 272.

Belongs to the HSP33 family. In terms of processing, under oxidizing conditions two disulfide bonds are formed involving the reactive cysteines. Under reducing conditions zinc is bound to the reactive cysteines and the protein is inactive.

The protein resides in the cytoplasm. Functionally, redox regulated molecular chaperone. Protects both thermally unfolding and oxidatively damaged proteins from irreversible aggregation. Plays an important role in the bacterial defense system toward oxidative stress. In Pseudomonas syringae pv. tomato (strain ATCC BAA-871 / DC3000), this protein is 33 kDa chaperonin.